Here is a 375-residue protein sequence, read N- to C-terminus: Cell division protein ZapE (375 aa).

78–85 is a binding site for ATP; that stretch reads GGVGRGKT.

This sequence belongs to the AFG1 ATPase family. ZapE subfamily. Interacts with FtsZ.

The protein resides in the cytoplasm. Functionally, reduces the stability of FtsZ polymers in the presence of ATP. The polypeptide is Cell division protein ZapE (Escherichia coli O157:H7).